The primary structure comprises 61 residues: PILIFAFVMFAVMVNAKPSIDDAEMKREPKPNIINAPCSGCYYQVGNECVYDKLKCGPVRK.

Positions 1–19 (PILIFAFVMFAVMVNAKPS) are cleaved as a signal peptide. Positions 20–31 (IDDAEMKREPKP) are excised as a propeptide. 2 disulfides stabilise this stretch: C38/C49 and C41/C56.

Belongs to the Hau1a/HC18/HC19 family.

The protein resides in the secreted. It is found in the nematocyst. Functionally, toxin that is lethal to crab. Does not produce the typical symptoms associated with sodium channel toxins in crabs, suggesting that it likely does not act on sodium channels. The protein is U-stichotoxin-Hcr1b of Radianthus crispa (Leathery sea anemone).